Reading from the N-terminus, the 307-residue chain is Elongation factor Ts (307 aa).

Residues 80 to 83 (TDFV) are involved in Mg(2+) ion dislocation from EF-Tu.

Belongs to the EF-Ts family.

It localises to the cytoplasm. In terms of biological role, associates with the EF-Tu.GDP complex and induces the exchange of GDP to GTP. It remains bound to the aminoacyl-tRNA.EF-Tu.GTP complex up to the GTP hydrolysis stage on the ribosome. This Clostridium botulinum (strain Kyoto / Type A2) protein is Elongation factor Ts.